The following is a 107-amino-acid chain: Neuroparsin-A (107 aa).

The N-terminal stretch at 1–22 (MKATAALVAATLLLAVTLFHRA) is a signal peptide. The propeptide occupies 23–24 (ER).

As to quaternary structure, homodimer; disulfide-linked.

Its function is as follows. Neurosparins are multifunctional neurohormones: they inhibit the effects of juvenile hormone, stimulate fluid reabsorption of isolated recta and induces an increase in hemolymph lipid and trehalose levels. This Locusta migratoria (Migratory locust) protein is Neuroparsin-A.